The chain runs to 822 residues: Pentatricopeptide repeat-containing protein At2g18940, chloroplastic (822 aa).

The segment at 1–42 is disordered; the sequence is MDGALFPHKPPYPIQSKRPPPSQSSNQSIKFSSATLHLPPPS. The transit peptide at 1–77 directs the protein to the chloroplast; that stretch reads MDGALFPHKP…SAAARFPSLE (77 aa). A compositionally biased stretch (pro residues) spans 8-22; sequence HKPPYPIQSKRPPPS. Over residues 23–37 the composition is skewed to low complexity; it reads QSSNQSIKFSSATLH. 17 PPR repeats span residues 209 to 243, 244 to 279, 280 to 314, 315 to 349, 350 to 384, 385 to 419, 420 to 454, 455 to 489, 490 to 524, 525 to 559, 560 to 594, 595 to 629, 630 to 664, 665 to 699, 700 to 734, 735 to 769, and 770 to 800; these read DVRA…GPSP, TLVT…GLKF, DEFT…GYEP, GTVT…SCPA, DSVT…GVMP, NAIT…GCVP, NTCT…GCSP, NRAT…GFEP, DRDT…GFNA, CVTT…GFKP, TETS…QIFP, SWML…GYKP, DMVI…GLSP, DLVT…QLKP, DLVS…GIRP, CIFT…DCRP, and NELT…IKTF.

It belongs to the PPR family. P subfamily.

The protein localises to the plastid. Its subcellular location is the chloroplast. This Arabidopsis thaliana (Mouse-ear cress) protein is Pentatricopeptide repeat-containing protein At2g18940, chloroplastic.